A 171-amino-acid chain; its full sequence is Shikimate kinase (171 aa).

14-19 (GAGKST) serves as a coordination point for ATP. A Mg(2+)-binding site is contributed by Ser-18. Substrate contacts are provided by Asp-36, Arg-60, and Gly-82. Residue Arg-120 coordinates ATP. Arg-139 is a binding site for substrate. Residue Gln-156 participates in ATP binding.

This sequence belongs to the shikimate kinase family. In terms of assembly, monomer. Mg(2+) serves as cofactor.

It localises to the cytoplasm. It carries out the reaction shikimate + ATP = 3-phosphoshikimate + ADP + H(+). It participates in metabolic intermediate biosynthesis; chorismate biosynthesis; chorismate from D-erythrose 4-phosphate and phosphoenolpyruvate: step 5/7. Its function is as follows. Catalyzes the specific phosphorylation of the 3-hydroxyl group of shikimic acid using ATP as a cosubstrate. In Shewanella sp. (strain MR-4), this protein is Shikimate kinase.